The chain runs to 92 residues: Small ribosomal subunit protein uS15c (92 aa).

The protein belongs to the universal ribosomal protein uS15 family. As to quaternary structure, part of the 30S ribosomal subunit.

The protein resides in the plastid. It is found in the chloroplast. This chain is Small ribosomal subunit protein uS15c (rps15), found in Carica papaya (Papaya).